The primary structure comprises 397 residues: NADH-quinone oxidoreductase subunit H 1 (397 aa).

10 consecutive transmembrane segments (helical) span residues 7-27, 84-104, 120-140, 156-176, 198-218, 258-278, 279-299, 313-333, 337-357, and 376-396; these read FIFISLVKAAVIFGVLMTTLA, PFLAITMALLSISVIPFGPVI, IGVLFILAVSSMGVYGIALAG, SAQMISYELPMSLAIAAPLLI, LLSGPFPQVISFIIFIIAAFA, MITVSAMATLLFLGGWMAPWP, AAYGSSLVPSILFGISGLVLL, TFPAFGIIFLGIAGIFLLPMV, LLPLFWFCAKTGAILFAFMWI, and FLFPVAMLNLLVTGFLVAWTT.

The protein belongs to the complex I subunit 1 family. In terms of assembly, NDH-1 is composed of 14 different subunits. Subunits NuoA, H, J, K, L, M, N constitute the membrane sector of the complex.

The protein resides in the cell inner membrane. The enzyme catalyses a quinone + NADH + 5 H(+)(in) = a quinol + NAD(+) + 4 H(+)(out). NDH-1 shuttles electrons from NADH, via FMN and iron-sulfur (Fe-S) centers, to quinones in the respiratory chain. The immediate electron acceptor for the enzyme in this species is believed to be ubiquinone. Couples the redox reaction to proton translocation (for every two electrons transferred, four hydrogen ions are translocated across the cytoplasmic membrane), and thus conserves the redox energy in a proton gradient. This subunit may bind ubiquinone. This is NADH-quinone oxidoreductase subunit H 1 from Solibacter usitatus (strain Ellin6076).